The chain runs to 283 residues: Orotidine 5'-phosphate decarboxylase (283 aa).

Residue lysine 97 is the Proton donor of the active site.

This sequence belongs to the OMP decarboxylase family. Type 2 subfamily.

The catalysed reaction is orotidine 5'-phosphate + H(+) = UMP + CO2. It participates in pyrimidine metabolism; UMP biosynthesis via de novo pathway; UMP from orotate: step 2/2. This chain is Orotidine 5'-phosphate decarboxylase, found in Clostridium botulinum (strain Loch Maree / Type A3).